We begin with the raw amino-acid sequence, 98 residues long: Omega-hexatoxin-Hr2b (98 aa).

An N-terminal signal peptide occupies residues 1-22; that stretch reads MKFSKLSLTLALILTQVLFVLC. Positions 24-56 are excised as a propeptide; that stretch reads KINEDFMKHGLESQALHDEIRKPIDSENPDTER. 3 disulfides stabilise this stretch: Cys-60/Cys-74, Cys-67/Cys-80, and Cys-73/Cys-85. Leu-97 carries the leucine amide modification.

Belongs to the neurotoxin 15 family. 02 (omega-actx) subfamily. In terms of tissue distribution, expressed by the venom gland.

It is found in the secreted. Its function is as follows. Potent inhibitor of insect, but not mammalian, voltage-gated calcium channels (Cav). The polypeptide is Omega-hexatoxin-Hr2b (Atrax robustus (Sydney funnel-web spider)).